The chain runs to 488 residues: Rhamnulokinase (488 aa).

Alanine 13–arginine 17 lines the ATP pocket. An intrachain disulfide couples cysteine 68 to cysteine 222. Substrate-binding positions include glycine 83 and histidine 236–threonine 238. The active-site Proton acceptor is the aspartate 237. An ATP-binding site is contributed by threonine 259. Substrate is bound at residue asparagine 296. Glutamine 304 contacts ATP. Cysteine 353 and cysteine 370 are oxidised to a cystine. Glycine 402 is an ATP binding site. Residues cysteine 413 and cysteine 417 are joined by a disulfide bond.

It belongs to the rhamnulokinase family. Requires Mg(2+) as cofactor.

The enzyme catalyses L-rhamnulose + ATP = L-rhamnulose 1-phosphate + ADP + H(+). The protein operates within carbohydrate degradation; L-rhamnose degradation; glycerone phosphate from L-rhamnose: step 2/3. Its function is as follows. Involved in the catabolism of L-rhamnose (6-deoxy-L-mannose). Catalyzes the transfer of the gamma-phosphate group from ATP to the 1-hydroxyl group of L-rhamnulose to yield L-rhamnulose 1-phosphate. The protein is Rhamnulokinase of Klebsiella pneumoniae (strain 342).